We begin with the raw amino-acid sequence, 194 residues long: Large ribosomal subunit protein bL12m (194 aa).

A mitochondrion-targeting transit peptide spans 1 to 33 (MSLRILAKRSSSIWMKTRVTPALISPITITTRF). An N-linked (GlcNAc...) asparagine glycan is attached at Asn34. The segment at 101–120 (AGNVPSSTGEAGSGAEEEAK) is disordered. Residues 105-114 (PSSTGEAGSG) show a composition bias toward low complexity.

The protein belongs to the bacterial ribosomal protein bL12 family. Component of the mitochondrial large ribosomal subunit (mt-LSU). Mature yeast 74S mitochondrial ribosomes consist of a small (37S) and a large (54S) subunit. The 37S small subunit contains a 15S ribosomal RNA (15S mt-rRNA) and 34 different proteins. The 54S large subunit contains a 21S rRNA (21S mt-rRNA) and 46 different proteins. In terms of processing, N-glycosylated.

The protein localises to the mitochondrion. In terms of biological role, component of the mitochondrial ribosome (mitoribosome), a dedicated translation machinery responsible for the synthesis of mitochondrial genome-encoded proteins, including at least some of the essential transmembrane subunits of the mitochondrial respiratory chain. The mitoribosomes are attached to the mitochondrial inner membrane and translation products are cotranslationally integrated into the membrane. The protein is Large ribosomal subunit protein bL12m (MNP1) of Saccharomyces cerevisiae (strain ATCC 204508 / S288c) (Baker's yeast).